The following is a 308-amino-acid chain: Eugenol synthase 1 (308 aa).

NADP(+) contacts are provided by residues 13-16 (TGYI), 35-45 (VRESTVSDPAK), Arg36, 86-88 (QMQ), 111-113 (SEF), Lys133, and 153-155 (NCF). Lys133 acts as the Proton donor/acceptor in catalysis.

Belongs to the NmrA-type oxidoreductase family. As to expression, in flowers, mostly expressed in limbs, and, to a lower extent, in tubes.

It carries out the reaction eugenol + a carboxylate + NADP(+) = a coniferyl ester + NADPH. The enzyme catalyses eugenol + acetate + NADP(+) = (E)-coniferyl acetate + NADPH. It functions in the pathway aromatic compound metabolism; phenylpropanoid biosynthesis. Functionally, involved in the biosynthesis of the floral volatile eugenol. Catalyzes the synthesis of the phenylpropene eugenol from coniferyl acetate. Phenylpropenes are produced by plants as defense compounds with antimicrobial and antianimal properties, or as floral attractants of pollinators. In Petunia hybrida (Petunia), this protein is Eugenol synthase 1.